The primary structure comprises 362 residues: 3-dehydroquinate synthase (362 aa).

Residues 95–99, 119–120, lysine 132, and lysine 141 each bind NAD(+); these read GVVGD and TT. Zn(2+) contacts are provided by glutamate 174, histidine 238, and histidine 255.

This sequence belongs to the sugar phosphate cyclases superfamily. Dehydroquinate synthase family. Co(2+) is required as a cofactor. Zn(2+) serves as cofactor. Requires NAD(+) as cofactor.

The protein resides in the cytoplasm. It catalyses the reaction 7-phospho-2-dehydro-3-deoxy-D-arabino-heptonate = 3-dehydroquinate + phosphate. It functions in the pathway metabolic intermediate biosynthesis; chorismate biosynthesis; chorismate from D-erythrose 4-phosphate and phosphoenolpyruvate: step 2/7. Its function is as follows. Catalyzes the conversion of 3-deoxy-D-arabino-heptulosonate 7-phosphate (DAHP) to dehydroquinate (DHQ). The chain is 3-dehydroquinate synthase from Chlorobium luteolum (strain DSM 273 / BCRC 81028 / 2530) (Pelodictyon luteolum).